The following is a 516-amino-acid chain: MAQSSRICHGVQNPCVIISNLSKSNQNKSPFSVSLKTHQPRASSWGLKKSGTMLNGSVIRPVKVTASVSTSEKASEIVLQPIREISGLIKLPGSKSLSNRILLLAALSEGTTVVDNLLNSDDINYMLDALKKLGLNVERDSVNNRAVVEGCGGIFPASLDSKSDIELYLGNAGTAMRPLTAAVTAAGGNASYVLDGVPRMRERPIGDLVVGLKQLGADVECTLGTNCPPVRVNANGGLPGGKVKLSGSISSQYLTALLMAAPLALGDVEIEIIDKLISVPYVEMTLKLMERFGVSAEHSDSWDRFFVKGGQKYKSPGNAYVEGDASSASYFLAGAAITGETVTVEGCGTTSLQGDVKFAEVLEKMGCKVSWTENSVTVTGPSRDAFGMRHLRAVDVNMNKMPDVAMTLAVVALFADGPTTIRDVASWRVKETERMIAICTELRKLGATVEEGSDYCVITPPAKVKPAEIDTYDDHRMAMAFSLAACADVPVTIKDPGCTRKTFPDYFQVLESITKH.

Residues 1-72 (MAQSSRICHG…KVTASVSTSE (72 aa)) constitute a chloroplast transit peptide. 3-phosphoshikimate is bound by residues Lys-95, Ser-96, and Arg-100. Lys-95 contributes to the phosphoenolpyruvate binding site. The phosphoenolpyruvate site is built by Gly-173 and Arg-203. 3-phosphoshikimate contacts are provided by Ser-250, Ser-251, Gln-252, Ser-278, Asp-403, and Lys-430. Phosphoenolpyruvate is bound at residue Gln-252. Asp-403 serves as the catalytic Proton acceptor. Phosphoenolpyruvate is bound by residues Arg-434, Arg-476, and Lys-501.

The protein belongs to the EPSP synthase family.

It is found in the plastid. Its subcellular location is the chloroplast. It catalyses the reaction 3-phosphoshikimate + phosphoenolpyruvate = 5-O-(1-carboxyvinyl)-3-phosphoshikimate + phosphate. It participates in metabolic intermediate biosynthesis; chorismate biosynthesis; chorismate from D-erythrose 4-phosphate and phosphoenolpyruvate: step 6/7. Catalyzes the transfer of the enolpyruvyl moiety of phosphoenolpyruvate (PEP) to the 5-hydroxyl of shikimate-3-phosphate (S3P) to produce enolpyruvyl shikimate-3-phosphate and inorganic phosphate. In Brassica napus (Rape), this protein is 3-phosphoshikimate 1-carboxyvinyltransferase, chloroplastic.